The primary structure comprises 109 residues: Ig kappa chain V region 3374 (109 aa).

Residues 1–24 are framework-1; sequence ADIVMTQTPASVSAAVGGTVTINC. Positions 25-35 are complementarity-determining-1; it reads QASQNIDSWLA. The interval 36–50 is framework-2; that stretch reads WYQQKPGQPPKVLIY. A complementarity-determining-2 region spans residues 51 to 57; that stretch reads RTSTLAS. A framework-3 region spans residues 58-89; it reads GVPSRFKGSRSGTEFTLTISDLECADAATYYC. Residues 90-98 form a complementarity-determining-3 region; it reads QSYYSISSA. Positions 99–108 are framework-4; that stretch reads FGGGTEVVVK.

The chain is Ig kappa chain V region 3374 from Oryctolagus cuniculus (Rabbit).